The following is a 384-amino-acid chain: Beta-ureidopropionase (384 aa).

A CN hydrolase domain is found at 72–344 (VHVGLVQNRI…DGLLVAKLDL (273 aa)). Glu119 (proton acceptor) is an active-site residue. Lys196 serves as the catalytic Proton donor. The Nucleophile role is filled by Cys233. Ser378 is modified (phosphoserine).

Belongs to the carbon-nitrogen hydrolase superfamily. BUP family. Homodimer, homotetramer, homooctamer; can also form higher homooligomers.

The protein resides in the cytoplasm. The enzyme catalyses 3-(carbamoylamino)propanoate + H2O + 2 H(+) = beta-alanine + NH4(+) + CO2. It carries out the reaction 3-(carbamoylamino)-2-methylpropanoate + H2O + 2 H(+) = (R)-3-amino-2-methylpropanoate + NH4(+) + CO2. It participates in amino-acid biosynthesis; beta-alanine biosynthesis. Functionally, catalyzes a late step in pyrimidine degradation. Converts N-carbamoyl-beta-alanine (3-ureidopropanoate) into beta-alanine, ammonia and carbon dioxide. Likewise, converts N-carbamoyl-beta-aminoisobutyrate (3-ureidoisobutyrate) into beta-aminoisobutyrate, ammonia and carbon dioxide. The chain is Beta-ureidopropionase (UPB1) from Pongo abelii (Sumatran orangutan).